A 336-amino-acid polypeptide reads, in one-letter code: CMP-sialic acid transporter (336 aa).

Residues 1–9 (MAPARENVS) are Cytoplasmic-facing. The helical transmembrane segment at 10–30 (LFFKLYCLTVMTLVAAAYTVA) threads the bilayer. Over 31–45 (LRYTRTTAEELYFST) the chain is Lumenal. Residues 46–64 (TAVCITEVIKLLISVGLLA) traverse the membrane as a helical segment. Residue lysine 55 participates in CMP-N-acetyl-beta-neuraminate binding. The Cytoplasmic segment spans residues 65-87 (KETGSLGRFKASLSENVLGSPKE). Residues 88–108 (LAKLSVPSLVYAVQNNMAFLA) traverse the membrane as a helical segment. CMP-N-acetyl-beta-neuraminate is bound at residue 101–102 (QN). Topologically, residues 109-114 (LSNLDA) are lumenal. Residues 115–135 (AVYQVTYQLKIPCTALCTVLM) traverse the membrane as a helical segment. 117–124 (YQVTYQLK) contributes to the CMP-N-acetyl-beta-neuraminate binding site. At 136-141 (LNRTLS) the chain is on the cytoplasmic side. A helical transmembrane segment spans residues 142–160 (KLQWISVFMLCGGVTLVQW). At 161-175 (KPAQATKVVVAQNPL) the chain is on the lumenal side. A helical membrane pass occupies residues 176–196 (LGFGAIAIAVLCSGFAGVYFE). Serine 188 serves as a coordination point for CMP-N-acetyl-beta-neuraminate. Residues 197 to 209 (KVLKSSDTSLWVR) lie on the Cytoplasmic side of the membrane. 210–214 (NIQMY) is a binding site for CMP-N-acetyl-beta-neuraminate. The chain crosses the membrane as a helical span at residues 210–228 (NIQMYLSGIVVTLAGTYLS). At 229–243 (DGAEIQEKGFFYGYT) the chain is on the lumenal side. Residues 244–262 (YYVWFVIFLASVGGLYTSV) form a helical membrane-spanning segment. Residues 263 to 269 (VVKYTDN) are Cytoplasmic-facing. A helical transmembrane segment spans residues 270-288 (IMKGFSAAAAIVLSTIASV). Lysine 272 provides a ligand contact to CMP-N-acetyl-beta-neuraminate. Topologically, residues 289 to 296 (LLFGLQIT) are lumenal. Residues 297–315 (LSFALGALLVCVSIYLYGL) form a helical membrane-spanning segment. Residues 316–336 (PRQDTTSIQQEATSKERIIGV) lie on the Cytoplasmic side of the membrane. The interval 316 to 336 (PRQDTTSIQQEATSKERIIGV) is disordered.

This sequence belongs to the nucleotide-sugar transporter family. SLC35A subfamily. As to quaternary structure, monomer. Ubiquitous. Found in all the tissues examined including skeletal muscle, brain, heart, liver, kidney and spleen.

Its subcellular location is the golgi apparatus membrane. It catalyses the reaction CMP-N-acetyl-beta-neuraminate(in) + CMP(out) = CMP-N-acetyl-beta-neuraminate(out) + CMP(in). The catalysed reaction is CMP-N-acetyl-beta-neuraminate(in) + AMP(out) = CMP-N-acetyl-beta-neuraminate(out) + AMP(in). It carries out the reaction CDP-L-ribitol(in) + CDP(out) = CDP-L-ribitol(out) + CDP(in). The enzyme catalyses UMP(out) + CMP-N-acetyl-beta-neuraminate(in) = UMP(in) + CMP-N-acetyl-beta-neuraminate(out). In terms of biological role, transports CMP-sialic acid from the cytosol into the Golgi apparatus, functioning as an antiporter that exchanges CMP-sialic acid for CMP. Binds both CMP-sialic acid and free CMP, but has higher affinity for free CMP. Also able to exchange CMP-sialic acid for AMP and UMP. Also mediates the transport of CDP-ribitol. The polypeptide is CMP-sialic acid transporter (Mus musculus (Mouse)).